The chain runs to 313 residues: Aspartate carbamoyltransferase catalytic subunit (313 aa).

Carbamoyl phosphate is bound by residues Arg58 and Thr59. Lys86 is a binding site for L-aspartate. 3 residues coordinate carbamoyl phosphate: Arg108, His136, and Gln139. L-aspartate is bound by residues Arg169 and Arg223. Gly264 and Pro265 together coordinate carbamoyl phosphate.

This sequence belongs to the aspartate/ornithine carbamoyltransferase superfamily. ATCase family. As to quaternary structure, heterododecamer (2C3:3R2) of six catalytic PyrB chains organized as two trimers (C3), and six regulatory PyrI chains organized as three dimers (R2).

The enzyme catalyses carbamoyl phosphate + L-aspartate = N-carbamoyl-L-aspartate + phosphate + H(+). It functions in the pathway pyrimidine metabolism; UMP biosynthesis via de novo pathway; (S)-dihydroorotate from bicarbonate: step 2/3. Functionally, catalyzes the condensation of carbamoyl phosphate and aspartate to form carbamoyl aspartate and inorganic phosphate, the committed step in the de novo pyrimidine nucleotide biosynthesis pathway. The chain is Aspartate carbamoyltransferase catalytic subunit from Halothermothrix orenii (strain H 168 / OCM 544 / DSM 9562).